The primary structure comprises 283 residues: 4-diphosphocytidyl-2-C-methyl-D-erythritol kinase (283 aa).

The active site involves Lys10. Position 99-109 (99-109 (PMGGGLGGGSS)) interacts with ATP. The active site involves Asp141.

This sequence belongs to the GHMP kinase family. IspE subfamily. In terms of assembly, homodimer.

It carries out the reaction 4-CDP-2-C-methyl-D-erythritol + ATP = 4-CDP-2-C-methyl-D-erythritol 2-phosphate + ADP + H(+). The protein operates within isoprenoid biosynthesis; isopentenyl diphosphate biosynthesis via DXP pathway; isopentenyl diphosphate from 1-deoxy-D-xylulose 5-phosphate: step 3/6. In terms of biological role, catalyzes the phosphorylation of the position 2 hydroxy group of 4-diphosphocytidyl-2C-methyl-D-erythritol. The chain is 4-diphosphocytidyl-2-C-methyl-D-erythritol kinase from Shigella boydii serotype 18 (strain CDC 3083-94 / BS512).